The following is a 122-amino-acid chain: Small ribosomal subunit protein uS13 (122 aa).

Residues 94-122 (GLPVRGQVTQKNARTRKGPRKTVAGKKGK) are disordered. Residues 106–122 (ARTRKGPRKTVAGKKGK) show a composition bias toward basic residues.

Belongs to the universal ribosomal protein uS13 family. As to quaternary structure, part of the 30S ribosomal subunit. Forms a loose heterodimer with protein S19. Forms two bridges to the 50S subunit in the 70S ribosome.

Its function is as follows. Located at the top of the head of the 30S subunit, it contacts several helices of the 16S rRNA. In the 70S ribosome it contacts the 23S rRNA (bridge B1a) and protein L5 of the 50S subunit (bridge B1b), connecting the 2 subunits; these bridges are implicated in subunit movement. Contacts the tRNAs in the A and P-sites. The protein is Small ribosomal subunit protein uS13 of Mycoplasma mobile (strain ATCC 43663 / 163K / NCTC 11711) (Mesomycoplasma mobile).